A 413-amino-acid chain; its full sequence is Ferredoxin--NADP reductase (413 aa).

Met-1 bears the N-acetylmethionine mark. The CpcD-like domain maps to 18–76 (NRLFVYEVIGLSQSTMTDGLDYPIRRSGSTFITVPLKRMNQEMRRITRMGGKIVSIKPL). The interval 74–120 (KPLEGDSPLPHTEGIAKPSQSEGSGSEAVANPAPESNKTMTTTPKEK) is disordered. Over residues 107–116 (PESNKTMTTT) the composition is skewed to polar residues. An FAD-binding FR-type domain is found at 133-256 (KTPYIGKVLE…TGPVGKEMLL (124 aa)). FAD is bound by residues 192 to 195 (RLYS), 213 to 215 (CVR), Tyr-219, 230 to 232 (VCS), and Thr-271. NADP(+)-binding residues include Ser-195 and Arg-215. NADP(+)-binding positions include Thr-271, 303 to 304 (IP), 333 to 334 (SR), 343 to 347 (RMYIQ), 372 to 373 (GL), and Glu-411.

This sequence belongs to the ferredoxin--NADP reductase type 1 family. Purifies with both the classic phycobilisome (PBS) supercomplex (CpcG-PBS) and a photosystem I-associated PBS called CpcL-PBS; it accumulates to a higher level in CpcL-PBS. In both PBS it can be cross-linked to both phycocyanin subunits. FAD is required as a cofactor. In terms of processing, acetylated at the N-terminus; 6% of protein in CpcG-PBS and 12% of protein in CpcL-PBS is acetylated.

The protein resides in the cellular thylakoid membrane. The enzyme catalyses 2 reduced [2Fe-2S]-[ferredoxin] + NADP(+) + H(+) = 2 oxidized [2Fe-2S]-[ferredoxin] + NADPH. This Synechocystis sp. (strain ATCC 27184 / PCC 6803 / Kazusa) protein is Ferredoxin--NADP reductase.